The following is a 444-amino-acid chain: 23S rRNA (uracil(1939)-C(5))-methyltransferase RlmD (444 aa).

One can recognise a TRAM domain in the interval 5-67; sequence RNRFDRTPFQ…RHFDEAKTVE (63 aa). The [4Fe-4S] cluster site is built by Cys-80, Cys-86, Cys-89, and Cys-168. S-adenosyl-L-methionine is bound by residues Gln-276, Phe-305, Asn-310, Glu-326, Asp-353, and Asp-374. The active-site Nucleophile is the Cys-400.

Belongs to the class I-like SAM-binding methyltransferase superfamily. RNA M5U methyltransferase family. RlmD subfamily.

It catalyses the reaction uridine(1939) in 23S rRNA + S-adenosyl-L-methionine = 5-methyluridine(1939) in 23S rRNA + S-adenosyl-L-homocysteine + H(+). Catalyzes the formation of 5-methyl-uridine at position 1939 (m5U1939) in 23S rRNA. In Xanthomonas oryzae pv. oryzae (strain MAFF 311018), this protein is 23S rRNA (uracil(1939)-C(5))-methyltransferase RlmD.